A 701-amino-acid chain; its full sequence is Elongation factor G (701 aa).

Residues 6–285 (HKVRNIGIMA…AVVAYLPNPL (280 aa)) form the tr-type G domain. GTP is bound by residues 15 to 22 (AHIDAGKT), 79 to 83 (DNPGH), and 133 to 136 (NKMD).

This sequence belongs to the TRAFAC class translation factor GTPase superfamily. Classic translation factor GTPase family. EF-G/EF-2 subfamily.

Its subcellular location is the cytoplasm. In terms of biological role, catalyzes the GTP-dependent ribosomal translocation step during translation elongation. During this step, the ribosome changes from the pre-translocational (PRE) to the post-translocational (POST) state as the newly formed A-site-bound peptidyl-tRNA and P-site-bound deacylated tRNA move to the P and E sites, respectively. Catalyzes the coordinated movement of the two tRNA molecules, the mRNA and conformational changes in the ribosome. This is Elongation factor G (fusA) from Micrococcus luteus (Micrococcus lysodeikticus).